Consider the following 371-residue polypeptide: Cytochrome b (371 aa).

Transmembrane regions (helical) follow at residues 25–45 (FGSMLLACSSMQVLTGFFLAV), 69–90 (WMMQNLHAIGASMFFICIYIHI), 105–125 (WLSGTTLLIMLMATAFFGYVL), and 170–190 (FFALHFILPFGIISLSSLHIM). Histidine 75 and histidine 89 together coordinate heme b. Heme b is bound by residues histidine 174 and histidine 188. Histidine 193 contacts a ubiquinone. The next 4 helical transmembrane spans lie at 218–238 (YKDLLMLSLMVLMLLMTVSFL), 280–300 (LWGALALAMSITILLTVPFTH), 312–332 (IMQLMFWTLVATFMVITWAAT), and 339–358 (FTMISQIASTIYFLFLIMNP).

This sequence belongs to the cytochrome b family. As to quaternary structure, the cytochrome bc1 complex contains 3 respiratory subunits (MT-CYB, CYC1 and UQCRFS1), 2 core proteins (UQCRC1 and UQCRC2) and probably 6 low-molecular weight proteins. The cofactor is heme b.

It localises to the mitochondrion inner membrane. Its function is as follows. Component of the ubiquinol-cytochrome c reductase complex (complex III or cytochrome b-c1 complex) that is part of the mitochondrial respiratory chain. The b-c1 complex mediates electron transfer from ubiquinol to cytochrome c. Contributes to the generation of a proton gradient across the mitochondrial membrane that is then used for ATP synthesis. This Eryx miliaris nogaiorum (Black sand boa) protein is Cytochrome b (MT-CYB).